Here is a 277-residue protein sequence, read N- to C-terminus: Glutamate racemase (277 aa).

Residues 16–17 (DS) and 48–49 (YG) contribute to the substrate site. Cys-79 (proton donor/acceptor) is an active-site residue. 80 to 81 (NT) provides a ligand contact to substrate. Cys-191 acts as the Proton donor/acceptor in catalysis. Substrate is bound at residue 192 to 193 (TH).

Belongs to the aspartate/glutamate racemases family.

The catalysed reaction is L-glutamate = D-glutamate. It participates in cell wall biogenesis; peptidoglycan biosynthesis. Its function is as follows. Provides the (R)-glutamate required for cell wall biosynthesis. This chain is Glutamate racemase, found in Symbiobacterium thermophilum (strain DSM 24528 / JCM 14929 / IAM 14863 / T).